A 109-amino-acid polypeptide reads, in one-letter code: uncharacterized protein (109 aa).

The chain crosses the membrane as a helical span at residues 75–95; it reads MALFHTVFILWPHFCGILWTV.

Its subcellular location is the membrane. This is an uncharacterized protein from Saccharomyces cerevisiae (strain ATCC 204508 / S288c) (Baker's yeast).